The chain runs to 414 residues: BICD family-like cargo adapter 2 (414 aa).

Residues 34–341 (GQALLEKNEE…DALNQQLLNT (308 aa)) adopt a coiled-coil conformation. Residues 372-384 (QEKEKENNKERTG) show a composition bias toward basic and acidic residues. Residues 372-399 (QEKEKENNKERTGFQRGTRTTKSLRLRG) form a disordered region.

In Danio rerio (Zebrafish), this protein is BICD family-like cargo adapter 2 (bicdl2).